A 207-amino-acid polypeptide reads, in one-letter code: dITP/XTP pyrophosphatase (207 aa).

Ser-7 to Lys-12 serves as a coordination point for substrate. Asp-72 serves as the catalytic Proton acceptor. Asp-72 is a Mg(2+) binding site. Substrate is bound by residues Ser-73, Phe-155–Asp-158, Lys-184, and His-189–Arg-190.

It belongs to the HAM1 NTPase family. Homodimer. Mg(2+) is required as a cofactor.

The catalysed reaction is XTP + H2O = XMP + diphosphate + H(+). It catalyses the reaction dITP + H2O = dIMP + diphosphate + H(+). It carries out the reaction ITP + H2O = IMP + diphosphate + H(+). Functionally, pyrophosphatase that catalyzes the hydrolysis of nucleoside triphosphates to their monophosphate derivatives, with a high preference for the non-canonical purine nucleotides XTP (xanthosine triphosphate), dITP (deoxyinosine triphosphate) and ITP. Seems to function as a house-cleaning enzyme that removes non-canonical purine nucleotides from the nucleotide pool, thus preventing their incorporation into DNA/RNA and avoiding chromosomal lesions. The sequence is that of dITP/XTP pyrophosphatase from Corynebacterium efficiens (strain DSM 44549 / YS-314 / AJ 12310 / JCM 11189 / NBRC 100395).